Consider the following 433-residue polypeptide: 23S rRNA (uracil(1939)-C(5))-methyltransferase RlmD (433 aa).

In terms of domain architecture, TRAM spans 10 to 68 (RTTTRQIITVSVNDLDSFGQGVARHNGKTLFIPGLLPQENAEVTVTEDKKQYARAKVVR). The [4Fe-4S] cluster site is built by C81, C87, C90, and C162. S-adenosyl-L-methionine is bound by residues Q265, F294, N299, E315, N342, and D363. C389 acts as the Nucleophile in catalysis.

Belongs to the class I-like SAM-binding methyltransferase superfamily. RNA M5U methyltransferase family. RlmD subfamily.

It carries out the reaction uridine(1939) in 23S rRNA + S-adenosyl-L-methionine = 5-methyluridine(1939) in 23S rRNA + S-adenosyl-L-homocysteine + H(+). Functionally, catalyzes the formation of 5-methyl-uridine at position 1939 (m5U1939) in 23S rRNA. The polypeptide is 23S rRNA (uracil(1939)-C(5))-methyltransferase RlmD (Escherichia coli (strain UTI89 / UPEC)).